A 420-amino-acid chain; its full sequence is Disease resistance protein CHS1 (420 aa).

The 156-residue stretch at 12–167 (RELDVFLSFS…QIADDIRLMF (156 aa)) folds into the TIR domain. Glu86 is an active-site residue. Residues 185–406 (MKALYALLAL…KDIKEVWKIM (222 aa)) form the NB-ARC domain.

Mostly expressed in leaves and flowers (mainly in sepals), and, at a lower intensity, in stems. Present at low levels in roots and seeds.

It localises to the cytoplasm. The protein resides in the nucleus. It catalyses the reaction NAD(+) + H2O = ADP-D-ribose + nicotinamide + H(+). In terms of biological role, confers resistance to low temperatures by limiting chloroplast damage and cell death, thus maintaining growth homeostasis. Regulates steryl-esters and sterols accumulation. Limits leaf necrosis associated with virulent bacterial infection (e.g. Pseudomonas syringae pv. tomato DC3000). This chain is Disease resistance protein CHS1, found in Arabidopsis thaliana (Mouse-ear cress).